Here is a 254-residue protein sequence, read N- to C-terminus: 3-deoxy-manno-octulosonate cytidylyltransferase (254 aa).

This sequence belongs to the KdsB family.

Its subcellular location is the cytoplasm. It catalyses the reaction 3-deoxy-alpha-D-manno-oct-2-ulosonate + CTP = CMP-3-deoxy-beta-D-manno-octulosonate + diphosphate. Its pathway is nucleotide-sugar biosynthesis; CMP-3-deoxy-D-manno-octulosonate biosynthesis; CMP-3-deoxy-D-manno-octulosonate from 3-deoxy-D-manno-octulosonate and CTP: step 1/1. It functions in the pathway bacterial outer membrane biogenesis; lipopolysaccharide biosynthesis. Functionally, activates KDO (a required 8-carbon sugar) for incorporation into bacterial lipopolysaccharide in Gram-negative bacteria. The protein is 3-deoxy-manno-octulosonate cytidylyltransferase of Pseudomonas putida (strain GB-1).